We begin with the raw amino-acid sequence, 389 residues long: Phosphoglycerate kinase (389 aa).

Residues 19 to 21 (DYN), Arg34, 57 to 60 (HLGR), Arg117, and Arg150 each bind substrate. ATP contacts are provided by residues Lys200, Gly288, Glu319, and 347 to 350 (GGDS).

The protein belongs to the phosphoglycerate kinase family. Monomer.

The protein resides in the cytoplasm. It carries out the reaction (2R)-3-phosphoglycerate + ATP = (2R)-3-phospho-glyceroyl phosphate + ADP. It participates in carbohydrate degradation; glycolysis; pyruvate from D-glyceraldehyde 3-phosphate: step 2/5. The chain is Phosphoglycerate kinase from Deinococcus geothermalis (strain DSM 11300 / CIP 105573 / AG-3a).